The chain runs to 407 residues: Arginine biosynthesis bifunctional protein ArgJ (407 aa).

Substrate is bound by residues T155, K181, T192, E278, N402, and T407. T192 serves as the catalytic Nucleophile.

It belongs to the ArgJ family. Heterotetramer of two alpha and two beta chains.

The protein resides in the cytoplasm. It carries out the reaction N(2)-acetyl-L-ornithine + L-glutamate = N-acetyl-L-glutamate + L-ornithine. The enzyme catalyses L-glutamate + acetyl-CoA = N-acetyl-L-glutamate + CoA + H(+). It functions in the pathway amino-acid biosynthesis; L-arginine biosynthesis; L-ornithine and N-acetyl-L-glutamate from L-glutamate and N(2)-acetyl-L-ornithine (cyclic): step 1/1. It participates in amino-acid biosynthesis; L-arginine biosynthesis; N(2)-acetyl-L-ornithine from L-glutamate: step 1/4. Its function is as follows. Catalyzes two activities which are involved in the cyclic version of arginine biosynthesis: the synthesis of N-acetylglutamate from glutamate and acetyl-CoA as the acetyl donor, and of ornithine by transacetylation between N(2)-acetylornithine and glutamate. This chain is Arginine biosynthesis bifunctional protein ArgJ, found in Thiobacillus denitrificans (strain ATCC 25259 / T1).